Consider the following 146-residue polypeptide: Hemoglobin subunit beta (146 aa).

At V1 the chain carries N-acetylvaline. Residues H2 to H146 form the Globin domain. A Phosphothreonine modification is found at T12. Phosphoserine is present on S44. The residue at position 59 (K59) is an N6-acetyllysine. H63 contacts heme b. At K82 the chain carries N6-acetyllysine. Residue H92 coordinates heme b. The residue at position 93 (C93) is an S-nitrosocysteine. K144 bears the N6-acetyllysine mark.

This sequence belongs to the globin family. Heterotetramer of two alpha chains and two beta chains. In terms of tissue distribution, red blood cells.

Its function is as follows. Involved in oxygen transport from the lung to the various peripheral tissues. This Saguinus mystax (Moustached tamarin) protein is Hemoglobin subunit beta (HBB).